The following is a 213-amino-acid chain: Thymidylate kinase (213 aa).

ATP is bound at residue 10 to 17 (GLEGAGKT).

Belongs to the thymidylate kinase family.

The catalysed reaction is dTMP + ATP = dTDP + ADP. Its function is as follows. Phosphorylation of dTMP to form dTDP in both de novo and salvage pathways of dTTP synthesis. This Salmonella arizonae (strain ATCC BAA-731 / CDC346-86 / RSK2980) protein is Thymidylate kinase.